The chain runs to 692 residues: Elongation factor G (692 aa).

In terms of domain architecture, tr-type G spans 8–283 (EMTRNIGIMA…AVLDYMPAPT (276 aa)). GTP-binding positions include 17–24 (AHIDAGKT), 81–85 (DTPGH), and 135–138 (NKMD).

This sequence belongs to the TRAFAC class translation factor GTPase superfamily. Classic translation factor GTPase family. EF-G/EF-2 subfamily.

The protein resides in the cytoplasm. Its function is as follows. Catalyzes the GTP-dependent ribosomal translocation step during translation elongation. During this step, the ribosome changes from the pre-translocational (PRE) to the post-translocational (POST) state as the newly formed A-site-bound peptidyl-tRNA and P-site-bound deacylated tRNA move to the P and E sites, respectively. Catalyzes the coordinated movement of the two tRNA molecules, the mRNA and conformational changes in the ribosome. The sequence is that of Elongation factor G from Citrifermentans bemidjiense (strain ATCC BAA-1014 / DSM 16622 / JCM 12645 / Bem) (Geobacter bemidjiensis).